A 923-amino-acid chain; its full sequence is ATP-dependent Clp protease ATP-binding subunit ClpA homolog CD4B, chloroplastic (923 aa).

The Clp R domain maps to 92 to 234 (FERFTEKAIK…RTQVIRMVGE (143 aa)). Repeat regions lie at residues 95–160 (FTEK…IGRG) and 170–234 (FTPR…MVGE). Residues 255-502 (LEEYGTNLTK…RVRLRHAQLP (248 aa)) are i. 300-307 (GEPGVGKT) is a binding site for ATP. In terms of domain architecture, UVR spans 509–544 (EKELRQITKEKNEAVRGQDFEKAGELRDREMDLKAQ). The tract at residues 569–760 (VTEADIQHIV…LLIMTSNVGS (192 aa)) is II. 643-650 (GPTGVGKS) provides a ligand contact to ATP.

It belongs to the ClpA/ClpB family.

The protein localises to the plastid. It localises to the chloroplast. Its function is as follows. May interact with a ClpP-like protease involved in degradation of denatured proteins in the chloroplast. This chain is ATP-dependent Clp protease ATP-binding subunit ClpA homolog CD4B, chloroplastic (CD4B), found in Solanum lycopersicum (Tomato).